The chain runs to 872 residues: Metabotropic glutamate receptor 2 (872 aa).

An N-terminal signal peptide occupies residues 1 to 18; it reads MESLLGFLALLLLWGAVA. The Extracellular portion of the chain corresponds to 19–567; it reads EGPAKKVLTL…QEYIRWGDAW (549 aa). Cysteines 50 and 92 form a disulfide. L-glutamate is bound by residues Arg-57, Arg-61, Ser-145, Ala-166, and Thr-168. 2 N-linked (GlcNAc...) asparagine glycosylation sites follow: Asn-203 and Asn-286. 7 disulfide bridges follow: Cys-234–Cys-518, Cys-355–Cys-362, Cys-400–Cys-407, Cys-500–Cys-519, Cys-504–Cys-522, Cys-525–Cys-537, and Cys-540–Cys-553. Asp-295 is a binding site for L-glutamate. N-linked (GlcNAc...) asparagine glycosylation occurs at Asn-338. Lys-377 serves as a coordination point for L-glutamate. Residue Asn-402 is glycosylated (N-linked (GlcNAc...) asparagine). The N-linked (GlcNAc...) asparagine glycan is linked to Asn-547. Residues 568 to 590 traverse the membrane as a helical segment; the sequence is AVGPVTIACLGALATLFVLGVFV. The Cytoplasmic portion of the chain corresponds to 591–604; that stretch reads RHNATPVVKASGRE. Residues 605 to 625 traverse the membrane as a helical segment; it reads LCYILLGGVFLCYCMTFVFIA. Over 626-636 the chain is Extracellular; it reads KPSTAVCTLRR. Cys-632 and Cys-721 are oxidised to a cystine. A helical transmembrane segment spans residues 637–655; it reads LGLGTAFSVCYSALLTKTN. Over 656 to 679 the chain is Cytoplasmic; it reads RIARIFGGAREGAQRPRFISPASQ. The important for interaction with HTR2A stretch occupies residues 677–685; the sequence is ASQVAICLA. A helical transmembrane segment spans residues 680-700; it reads VAICLALISGQLLIVAAWLVV. Residues 701–725 lie on the Extracellular side of the membrane; that stretch reads EAPGTGKETAPERREVVTLRCNHRD. The helical transmembrane segment at 726 to 747 threads the bilayer; the sequence is ASMLGSLAYNVLLIALCTLYAF. Over 748–760 the chain is Cytoplasmic; the sequence is KTRKCPENFNEAK. Residues 761–783 form a helical membrane-spanning segment; that stretch reads FIGFTMYTTCIIWLAFLPIFYVT. Topologically, residues 784–793 are extracellular; the sequence is SSDYRVQTTT. The helical transmembrane segment at 794-819 threads the bilayer; it reads MCVSVSLSGSVVLGCLFAPKLHIILF. Topologically, residues 820 to 872 are cytoplasmic; it reads QPQKNVVSHRAPTSRFGSAAPRASANLGQGSGSQFVPTVCNGREVVDSTTSSL.

Belongs to the G-protein coupled receptor 3 family. Forms heterodimers with GRM3 or GRM4. Interacts with GNAI1. Interacts with TAMALIN. Interacts with HTR2A. As to expression, is widely distributed in the CNS and prominent expression is seen in Golgi cells of the cerebellum and some particular neuronal cells in other brain regions.

The protein localises to the cell membrane. Its subcellular location is the synapse. The protein resides in the cell projection. It localises to the dendrite. Dimeric G protein-coupled receptor which is activated by the excitatory neurotransmitter L-glutamate. Plays critical roles in modulating synaptic transmission and neuronal excitability. Upon activation by glutamate, inhibits presynaptic calcium channels, reducing further glutamate release and dampening excitatory signaling. Mechanistically, ligand binding causes a conformation change that triggers signaling via guanine nucleotide-binding proteins (G proteins) and modulates the activity of down-stream effectors, such as adenylate cyclase. May mediate suppression of neurotransmission or may be involved in synaptogenesis or synaptic stabilization. This chain is Metabotropic glutamate receptor 2 (Grm2), found in Rattus norvegicus (Rat).